A 79-amino-acid polypeptide reads, in one-letter code: Ornithine decarboxylase (79 aa).

Residues S8, G45, and 75–78 (EPGR) each bind pyridoxal 5'-phosphate.

Belongs to the Orn/Lys/Arg decarboxylase class-II family. In terms of assembly, homodimer. Only the dimer is catalytically active, as the active sites are constructed of residues from both monomers. Pyridoxal 5'-phosphate serves as cofactor.

The protein resides in the cytoplasm. It catalyses the reaction L-ornithine + H(+) = putrescine + CO2. Its pathway is amine and polyamine biosynthesis; putrescine biosynthesis via L-ornithine pathway; putrescine from L-ornithine: step 1/1. Inhibited by antizyme (AZ) OAZ1 in response to polyamine levels. AZ inhibits the assembly of the functional homodimer by binding to ODC monomers and targeting them for ubiquitin-independent proteolytic destruction by the 26S proteasome. In terms of biological role, catalyzes the first and rate-limiting step of polyamine biosynthesis that converts ornithine into putrescine, which is the precursor for the polyamines, spermidine and spermine. Polyamines are essential for cell proliferation and are implicated in cellular processes, ranging from DNA replication to apoptosis. This is Ornithine decarboxylase (ODC) from Paracoccidioides brasiliensis.